Here is a 158-residue protein sequence, read N- to C-terminus: N5-carboxyaminoimidazole ribonucleotide mutase (158 aa).

S10, D13, and R40 together coordinate substrate.

Belongs to the AIR carboxylase family. Class I subfamily.

The catalysed reaction is 5-carboxyamino-1-(5-phospho-D-ribosyl)imidazole + H(+) = 5-amino-1-(5-phospho-D-ribosyl)imidazole-4-carboxylate. It participates in purine metabolism; IMP biosynthesis via de novo pathway; 5-amino-1-(5-phospho-D-ribosyl)imidazole-4-carboxylate from 5-amino-1-(5-phospho-D-ribosyl)imidazole (N5-CAIR route): step 2/2. Catalyzes the conversion of N5-carboxyaminoimidazole ribonucleotide (N5-CAIR) to 4-carboxy-5-aminoimidazole ribonucleotide (CAIR). This Saccharolobus solfataricus (strain ATCC 35092 / DSM 1617 / JCM 11322 / P2) (Sulfolobus solfataricus) protein is N5-carboxyaminoimidazole ribonucleotide mutase.